We begin with the raw amino-acid sequence, 561 residues long: uncharacterized protein (561 aa).

Disordered stretches follow at residues 20–42 (IQEQ…GCSP) and 82–283 (QIGS…STPF). Basic and acidic residues predominate over residues 103 to 131 (DKISEDTDQERVVVCESLENKSSSKDKSP). Composition is skewed to basic residues over residues 135–156 (RSPK…KSSK) and 165–185 (KSSK…KRYR). Basic and acidic residues-rich tracts occupy residues 192-203 (SLSRDRSSSRDR), 211-247 (YSRD…DRSP), and 259-272 (PLRD…RSVS).

It belongs to the mimivirus L41 family.

This is an uncharacterized protein from Acanthamoeba polyphaga (Amoeba).